The chain runs to 474 residues: Synaptotagmin-17 (474 aa).

Residues 60–117 (WLMASRSNDKDGDSVHTASDVPLTPRTNSPDGRRSSSDTSKSTYSLTRRISSLDSRRP) form a disordered region. Low complexity predominate over residues 96–117 (SDTSKSTYSLTRRISSLDSRRP). Phosphoserine occurs at positions 118 and 119. C2 domains follow at residues 184–310 (QLGM…HWWK) and 321–455 (ELGE…EQWH).

This sequence belongs to the synaptotagmin family. In terms of tissue distribution, expressed in brain and kidney.

It localises to the membrane. Its function is as follows. Plays a role in dendrite formation by melanocytes. This Rattus norvegicus (Rat) protein is Synaptotagmin-17 (Syt17).